The sequence spans 469 residues: Uronate isomerase (469 aa).

This sequence belongs to the metallo-dependent hydrolases superfamily. Uronate isomerase family.

The catalysed reaction is D-glucuronate = D-fructuronate. The enzyme catalyses aldehydo-D-galacturonate = keto-D-tagaturonate. Its pathway is carbohydrate metabolism; pentose and glucuronate interconversion. The sequence is that of Uronate isomerase from Pectobacterium atrosepticum (strain SCRI 1043 / ATCC BAA-672) (Erwinia carotovora subsp. atroseptica).